Reading from the N-terminus, the 752-residue chain is MNINPYFLFIDVPIQAAISTTFPYTGVPPYSHGTGTGYTIDTVIRTHEYSNKGKQYISDVTGCAMVDPTNGPLPEDNEPSAYAQLDCVLEALDRMDEEHPGLFQAASQNAMEALMVTTVDKLTQGRQTFDWTVCRNQPAATALNTTITSFRLNDLNGADKGGLVPFCQDIIDSLDKPEMTFFSVKNIKKKLPAKNRKGFLIKRIPMKVKDRITRVEYIKRALSLNTMTKDAERGKLKRRAIATAGIQIRGFVLVVENLAKNICENLEQSGLPVGGNEKKAKLSNAVAKMLSNCPPGGISMTVTGDNTKWNECLNPRIFLAMTERITRDSPIWFRDFCSIAPVLFSNKIARLGKGFMITSKTKRLKAQIPCPDLFNIPLERYNEETRAKLKKLKPFFNEEGTASLSPGMMMGMFNMLSTVLGVAALGIKNIGNKEYLWDGLQSSDDFALFVNAKDEETCMEGINDFYRTCKLLGINMSKKKSYCNETGMFEFTSMFYRDGFVSNFAMELPSFGVAGVNESADMAIGMTIIKNNMINNGMGPATAQTAIQLFIADYRYTYKCHRGDSKVEGKRMKIIKELWENTKGRDGLLVADGGPNIYNLRNLHIPEIVLKYNLMDPEYKGRLLHPQNPFVGHLSIEGIKEADITPAHGPVKKMDYDAVSGTHSWRTKRNRSILNTDQRNMILEEQCYAKCCNLFEACFNSASYRKPVGQHSMLEAMAHRLRMDARLDYESGRMSKDDFEKAMAHLGEIGYI.

2 consecutive short sequence motifs (nuclear localization signal) follow at residues 187-195 and 203-216; these read IKKKLPAKN and RIPM…TRVE. Residues 249 to 256 form a promoter-binding site region; that stretch reads RGFVLVVE. A RdRp catalytic domain is found at 286 to 482; that stretch reads VAKMLSNCPP…GINMSKKKSY (197 aa).

This sequence belongs to the influenza viruses polymerase PB1 family. As to quaternary structure, influenza RNA polymerase is composed of three subunits: PB1, PB2 and PA. Interacts (via N-terminus) with PA (via C-terminus). Interacts (via C-terminus) with PB2 (via N-terminus); this interaction is essential for transcription initiation. Phosphorylated by host PRKCA.

The protein localises to the host nucleus. It is found in the host cytoplasm. The catalysed reaction is RNA(n) + a ribonucleoside 5'-triphosphate = RNA(n+1) + diphosphate. RNA-dependent RNA polymerase which is responsible for replication and transcription of virus RNA segments. The transcription of viral mRNAs occurs by a unique mechanism called cap-snatching. 5' methylated caps of cellular mRNAs are cleaved after 10-13 nucleotides by PA. In turn, these short capped RNAs are used as primers by PB1 for transcription of viral mRNAs. During virus replication, PB1 initiates RNA synthesis and copy vRNA into complementary RNA (cRNA) which in turn serves as a template for the production of more vRNAs. The polypeptide is RNA-directed RNA polymerase catalytic subunit (Homo sapiens (Human)).